Consider the following 256-residue polypeptide: Small ribosomal subunit protein eS1 (256 aa).

The residue at position 2 (Ala-2) is an N-acetylalanine; partial.

It belongs to the eukaryotic ribosomal protein eS1 family. Component of the small ribosomal subunit. Mature ribosomes consist of a small (40S) and a large (60S) subunit. The 40S subunit contains about 33 different proteins and 1 molecule of RNA (18S). The 60S subunit contains about 49 different proteins and 3 molecules of RNA (25S, 5.8S and 5S).

The protein resides in the cytoplasm. This Lentinula edodes (Shiitake mushroom) protein is Small ribosomal subunit protein eS1.